We begin with the raw amino-acid sequence, 183 residues long: NAD(P)H-quinone oxidoreductase subunit I, chloroplastic (183 aa).

4Fe-4S ferredoxin-type domains are found at residues 55-84 (GRIH…VDWE) and 95-124 (TSYS…MTEE). Residues Cys64, Cys67, Cys70, Cys74, Cys104, Cys107, Cys110, and Cys114 each contribute to the [4Fe-4S] cluster site.

This sequence belongs to the complex I 23 kDa subunit family. NDH is composed of at least 16 different subunits, 5 of which are encoded in the nucleus. [4Fe-4S] cluster is required as a cofactor.

It is found in the plastid. The protein localises to the chloroplast thylakoid membrane. It catalyses the reaction a plastoquinone + NADH + (n+1) H(+)(in) = a plastoquinol + NAD(+) + n H(+)(out). The catalysed reaction is a plastoquinone + NADPH + (n+1) H(+)(in) = a plastoquinol + NADP(+) + n H(+)(out). In terms of biological role, NDH shuttles electrons from NAD(P)H:plastoquinone, via FMN and iron-sulfur (Fe-S) centers, to quinones in the photosynthetic chain and possibly in a chloroplast respiratory chain. The immediate electron acceptor for the enzyme in this species is believed to be plastoquinone. Couples the redox reaction to proton translocation, and thus conserves the redox energy in a proton gradient. The polypeptide is NAD(P)H-quinone oxidoreductase subunit I, chloroplastic (Huperzia lucidula (Shining clubmoss)).